The chain runs to 284 residues: 2-dehydro-3-deoxyphosphooctonate aldolase (284 aa).

The protein belongs to the KdsA family.

The protein localises to the cytoplasm. It carries out the reaction D-arabinose 5-phosphate + phosphoenolpyruvate + H2O = 3-deoxy-alpha-D-manno-2-octulosonate-8-phosphate + phosphate. Its pathway is carbohydrate biosynthesis; 3-deoxy-D-manno-octulosonate biosynthesis; 3-deoxy-D-manno-octulosonate from D-ribulose 5-phosphate: step 2/3. It participates in bacterial outer membrane biogenesis; lipopolysaccharide biosynthesis. This is 2-dehydro-3-deoxyphosphooctonate aldolase from Pectobacterium atrosepticum (strain SCRI 1043 / ATCC BAA-672) (Erwinia carotovora subsp. atroseptica).